Consider the following 612-residue polypeptide: Dihydroxy-acid dehydratase (612 aa).

Asp81 is a binding site for Mg(2+). Cys122 contributes to the [2Fe-2S] cluster binding site. Mg(2+)-binding residues include Asp123 and Lys124. Lys124 carries the N6-carboxylysine modification. Cys193 serves as a coordination point for [2Fe-2S] cluster. Glu489 provides a ligand contact to Mg(2+). Ser515 acts as the Proton acceptor in catalysis.

Belongs to the IlvD/Edd family. Homodimer. Requires [2Fe-2S] cluster as cofactor. Mg(2+) serves as cofactor.

The catalysed reaction is (2R)-2,3-dihydroxy-3-methylbutanoate = 3-methyl-2-oxobutanoate + H2O. The enzyme catalyses (2R,3R)-2,3-dihydroxy-3-methylpentanoate = (S)-3-methyl-2-oxopentanoate + H2O. Its pathway is amino-acid biosynthesis; L-isoleucine biosynthesis; L-isoleucine from 2-oxobutanoate: step 3/4. The protein operates within amino-acid biosynthesis; L-valine biosynthesis; L-valine from pyruvate: step 3/4. Functions in the biosynthesis of branched-chain amino acids. Catalyzes the dehydration of (2R,3R)-2,3-dihydroxy-3-methylpentanoate (2,3-dihydroxy-3-methylvalerate) into 2-oxo-3-methylpentanoate (2-oxo-3-methylvalerate) and of (2R)-2,3-dihydroxy-3-methylbutanoate (2,3-dihydroxyisovalerate) into 2-oxo-3-methylbutanoate (2-oxoisovalerate), the penultimate precursor to L-isoleucine and L-valine, respectively. This chain is Dihydroxy-acid dehydratase, found in Pseudomonas aeruginosa (strain LESB58).